A 411-amino-acid polypeptide reads, in one-letter code: MKKRKGLLIILDGLGDRPIKEFGGKTPLEYANTPNMDRLAKMGILGQQDPIKPGQPAGSDTAHLSIFGYDPYKVYRGRGFLEALGVGLDLNEDDLAFRVNFATIENGIITDRRAGRISTEEAHELAKAVQENVKLPVDFIFVGATGHRAVLVLRGMAKGYRVGENDPHEAGKPPQEFTWEDEESKKVAEILEEFVQKAHEVLDKHPINEKRRKEGKPPANYLLIRGAGTYPDIPMKFTEQWKVKAGAVIAVSLVKGVARAIGFDVYTPEGATGEYNTDVMAKAKKTVELLKDYDFVFLHFKPTDAAGHDNNPKLKAEMIEKADRMIGYILEHIDLEDVVIAITGDHSTPCEVMNHSGDPVPLLIAGGGVRPDHTESFGERECMRGGIGRIKGHDIVPIMMDLMNRSEKFGA.

This sequence belongs to the BPG-independent phosphoglycerate mutase family. A-PGAM subfamily.

It catalyses the reaction (2R)-2-phosphoglycerate = (2R)-3-phosphoglycerate. Its pathway is carbohydrate degradation; glycolysis; pyruvate from D-glyceraldehyde 3-phosphate: step 3/5. Its function is as follows. Catalyzes the interconversion of 2-phosphoglycerate and 3-phosphoglycerate. The protein is 2,3-bisphosphoglycerate-independent phosphoglycerate mutase of Thermococcus kodakarensis (strain ATCC BAA-918 / JCM 12380 / KOD1) (Pyrococcus kodakaraensis (strain KOD1)).